The chain runs to 626 residues: Phosphomethylpyrimidine synthase (626 aa).

The disordered stretch occupies residues 1–27 (MSKQEKAISLSESAQVDQQSVQPLPNS). The segment covering 10–25 (LSESAQVDQQSVQPLP) has biased composition (polar residues). Substrate is bound by residues Asn-232, Met-261, Tyr-290, His-326, 346–348 (SRG), 387–390 (DGLR), and Glu-426. His-430 serves as a coordination point for Zn(2+). Position 453 (Tyr-453) interacts with substrate. His-494 provides a ligand contact to Zn(2+). The [4Fe-4S] cluster site is built by Cys-574, Cys-577, and Cys-582.

This sequence belongs to the ThiC family. In terms of assembly, homodimer. The cofactor is [4Fe-4S] cluster.

It carries out the reaction 5-amino-1-(5-phospho-beta-D-ribosyl)imidazole + S-adenosyl-L-methionine = 4-amino-2-methyl-5-(phosphooxymethyl)pyrimidine + CO + 5'-deoxyadenosine + formate + L-methionine + 3 H(+). Its pathway is cofactor biosynthesis; thiamine diphosphate biosynthesis. In terms of biological role, catalyzes the synthesis of the hydroxymethylpyrimidine phosphate (HMP-P) moiety of thiamine from aminoimidazole ribotide (AIR) in a radical S-adenosyl-L-methionine (SAM)-dependent reaction. This chain is Phosphomethylpyrimidine synthase, found in Pseudomonas entomophila (strain L48).